The sequence spans 662 residues: UPF0313 protein CPE1196 (662 aa).

One can recognise a Radical SAM core domain in the interval 296-567 (AIEEVKFSLV…AMQRALLQFK (272 aa)). Residues C310, C314, and C317 each contribute to the [4Fe-4S] cluster site. The segment at 597-662 (RDKNSFGKGN…QRGSKGKKRR (66 aa)) is disordered. The segment covering 618-632 (NRNENSGRRESEDKK) has biased composition (basic and acidic residues). The segment covering 633 to 644 (RSSHSKKQRGNK) has biased composition (basic residues).

The protein belongs to the UPF0313 family. Requires [4Fe-4S] cluster as cofactor.

This is UPF0313 protein CPE1196 from Clostridium perfringens (strain 13 / Type A).